The chain runs to 273 residues: Undecaprenyl-diphosphatase (273 aa).

7 helical membrane passes run 4-24 (FLLL…FLPI), 43-63 (KGKV…CWEY), 83-103 (FVLN…LFIK), 109-129 (LFHP…ILWA), 184-204 (ATEF…FYDL), 218-238 (VFAI…RGLL), and 248-268 (VFAW…YSGM).

Belongs to the UppP family.

It is found in the cell inner membrane. The enzyme catalyses di-trans,octa-cis-undecaprenyl diphosphate + H2O = di-trans,octa-cis-undecaprenyl phosphate + phosphate + H(+). In terms of biological role, catalyzes the dephosphorylation of undecaprenyl diphosphate (UPP). Confers resistance to bacitracin. This chain is Undecaprenyl-diphosphatase, found in Nitrosospira multiformis (strain ATCC 25196 / NCIMB 11849 / C 71).